The primary structure comprises 211 residues: Large ribosomal subunit protein uL3 (211 aa).

Glutamine 150 carries the N5-methylglutamine modification.

Belongs to the universal ribosomal protein uL3 family. Part of the 50S ribosomal subunit. Forms a cluster with proteins L14 and L19. Post-translationally, methylated by PrmB.

Functionally, one of the primary rRNA binding proteins, it binds directly near the 3'-end of the 23S rRNA, where it nucleates assembly of the 50S subunit. This chain is Large ribosomal subunit protein uL3, found in Pseudomonas putida (strain GB-1).